Reading from the N-terminus, the 269-residue chain is Hdr-like menaquinol oxidoreductase iron-sulfur subunit 1 (269 aa).

The tat-type signal signal peptide spans 1–26 (MMSRRKFLLLTGAAAAGAILTPQISA). [4Fe-4S] cluster-binding residues include Cys-52, Cys-55, Cys-72, Cys-76, Cys-118, Cys-121, Cys-126, Cys-130, Cys-150, Cys-153, Cys-156, Cys-160, Cys-194, Cys-197, Cys-215, and Cys-219. The region spanning 141 to 170 (GIVEIDMHRCIGCRYCMIACPYGARCFNFI) is the 4Fe-4S ferredoxin-type domain.

Consists of five subunits: an integral membrane subunit, a cytochrome b-like subunit, a cytochrome c subunit and two iron-sulfur subunits. Requires [4Fe-4S] cluster as cofactor. Predicted to be exported by the Tat system. The position of the signal peptide cleavage has been experimentally proven.

It localises to the cell membrane. Has menaquinol-oxidizing activity. HmeA, HmeB and HmeE subunits may together catalyze electron transfer from menaquinol to cytochrome c. The chain is Hdr-like menaquinol oxidoreductase iron-sulfur subunit 1 (hmeA) from Archaeoglobus fulgidus (strain ATCC 49558 / DSM 4304 / JCM 9628 / NBRC 100126 / VC-16).